Consider the following 250-residue polypeptide: Undecaprenyl-diphosphatase (250 aa).

7 helical membrane-spanning segments follow: residues 35-55 (DLSVFALLHLATLAAIVIFVG), 73-93 (INLTLKIIVSTIPAAIFGVLL), 100-120 (SLSNLKIISFFFLVTSAALLI), 146-166 (ALAIFPGISRSGFTLFGSLLI), 171-191 (EIALKYSFLVSIPVILGAGLL), 200-220 (SYSISSAIVAFFFGLLSLFIL), and 229-249 (LKIFSAYCIFISIFSFVLGGI).

The protein belongs to the UppP family.

It localises to the cell inner membrane. It carries out the reaction di-trans,octa-cis-undecaprenyl diphosphate + H2O = di-trans,octa-cis-undecaprenyl phosphate + phosphate + H(+). Its function is as follows. Catalyzes the dephosphorylation of undecaprenyl diphosphate (UPP). Confers resistance to bacitracin. In Thermosipho melanesiensis (strain DSM 12029 / CIP 104789 / BI429), this protein is Undecaprenyl-diphosphatase.